Consider the following 221-residue polypeptide: Ribosomal RNA large subunit methyltransferase E (221 aa).

Glycine 60, tryptophan 62, aspartate 89, aspartate 105, and aspartate 134 together coordinate S-adenosyl-L-methionine. Residue lysine 174 is the Proton acceptor of the active site. The interval 199–221 (KPKASRDKSSETFLLGRQLKHPG) is disordered.

It belongs to the class I-like SAM-binding methyltransferase superfamily. RNA methyltransferase RlmE family.

The protein localises to the cytoplasm. It carries out the reaction uridine(2552) in 23S rRNA + S-adenosyl-L-methionine = 2'-O-methyluridine(2552) in 23S rRNA + S-adenosyl-L-homocysteine + H(+). Specifically methylates the uridine in position 2552 of 23S rRNA at the 2'-O position of the ribose in the fully assembled 50S ribosomal subunit. The polypeptide is Ribosomal RNA large subunit methyltransferase E (Ralstonia pickettii (strain 12J)).